We begin with the raw amino-acid sequence, 205 residues long: Macrophage immunometabolism regulator (205 aa).

The tract at residues 1–40 is disordered; that stretch reads MEVDINGVNRTNNSVPSTAEGSSPSKPDPEKPRCSSTPCS. Positions 8-25 are enriched in polar residues; it reads VNRTNNSVPSTAEGSSPS.

The protein belongs to the UNC119-binding protein family. In terms of assembly, interacts with unc119 family proteins; interaction preferentially takes place when unc119 proteins are unliganded with myristoylated proteins.

It localises to the cytoplasm. Its subcellular location is the cell projection. It is found in the cilium. May play a role in immune regulation through regulation of the macrophage function. May also play a role in trafficking of proteins via its interaction with unc119 family cargo adapters. May play a role in ciliary membrane localization. This is Macrophage immunometabolism regulator (macir) from Xenopus laevis (African clawed frog).